Here is a 440-residue protein sequence, read N- to C-terminus: Serine/threonine-protein kinase VRK1 (440 aa).

Residues 37–317 (WKLGLPIGQG…LLEYTEKPLY (281 aa)) form the Protein kinase domain. ATP contacts are provided by residues 43–51 (IGQGGFGCI) and K71. K71 is covalently cross-linked (Glycyl lysine isopeptide (Lys-Gly) (interchain with G-Cter in SUMO2)). The Proton acceptor role is filled by D177. The residue at position 342 (S342) is a Phosphoserine; by PLK3. Position 376 is a phosphoserine (S376). T378 carries the phosphothreonine modification. Composition is skewed to polar residues over residues 379–391 (QVQEAAQTRSVES) and 398–410 (SMSQPAAGCSSSD). The disordered stretch occupies residues 379–440 (QVQEAAQTRS…GSRTRKKAQK (62 aa)). Positions 387 to 393 (RSVESQG) are required for interaction with the nucleosome.

The protein belongs to the protein kinase superfamily. CK1 Ser/Thr protein kinase family. VRK subfamily. As to quaternary structure, interacts with HDAC1, KAT2B, SETDB1, KDM3A and KDM4A. Associates with the nucleosome through interactions with nucleosome DNA, histone H2A and histone H2B; the interaction with H2A and H2B is mediated by the nucleosome acidic patch, a cluster of negatively charged residues of H2A and H2B forming a cleft within the nucleosome core. Autophosphorylated at various serine and threonine residues. Autophosphorylation does not impair its ability to phosphorylate p53/TP53. Phosphorylation by PLK3 leads to induction of Golgi fragmentation during mitosis. Highly expressed in testis. Expressed in liver, kidney and muscle. Weakly expressed in thymus, bone marrow and spleen.

It is found in the nucleus. The protein localises to the cytoplasm. Its subcellular location is the cajal body. It catalyses the reaction L-seryl-[protein] + ATP = O-phospho-L-seryl-[protein] + ADP + H(+). The catalysed reaction is L-threonyl-[protein] + ATP = O-phospho-L-threonyl-[protein] + ADP + H(+). Active in presence of Mn(2+), Mg(2+) and Zn(2+), but is not functional with Ca(2+) or Cu(2+). Has a higher affinity for Mn(2+) than for Mg(2+). RAN inhibits its autophosphorylation and its ability to phosphorylate histone H3. Its function is as follows. Serine/threonine kinase involved in the regulation of key cellular processes including the cell cycle, nuclear condensation, transcription regulation, and DNA damage response. Controls chromatin organization and remodeling by mediating phosphorylation of histone H3 on 'Thr-4' and histone H2AX (H2aXT4ph). It also phosphorylates KAT5 in response to DNA damage, promoting KAT5 association with chromatin and histone acetyltransferase activity. Is involved in the regulation of cell cycle progression of neural progenitors, and is required for proper cortical neuronal migration. Is involved in neurite elongation and branching in motor neurons, and has an essential role in Cajal bodies assembly, acting through COIL phosphorylation and the control of coilin degradation. Involved in Golgi disassembly during the cell cycle: following phosphorylation by PLK3 during mitosis, required to induce Golgi fragmentation. Phosphorylates BANF1: disrupts its ability to bind DNA, reduces its binding to LEM domain-containing proteins and causes its relocalization from the nucleus to the cytoplasm. Phosphorylates TP53BP1 and p53/TP53 on 'Thr-18', preventing the interaction between p53/TP53 and MDM2. Phosphorylates ATF2 which activates its transcriptional activity. Phosphorylates JUN. The protein is Serine/threonine-protein kinase VRK1 of Mus musculus (Mouse).